The chain runs to 111 residues: Nucleoid-associated protein Teth39_2199 (111 aa).

This sequence belongs to the YbaB/EbfC family. Homodimer.

The protein localises to the cytoplasm. Its subcellular location is the nucleoid. In terms of biological role, binds to DNA and alters its conformation. May be involved in regulation of gene expression, nucleoid organization and DNA protection. The protein is Nucleoid-associated protein Teth39_2199 of Thermoanaerobacter pseudethanolicus (strain ATCC 33223 / 39E) (Clostridium thermohydrosulfuricum).